The chain runs to 20 residues: Cytochrome c oxidase subunit 8B, mitochondrial (20 aa).

The protein belongs to the cytochrome c oxidase VIII family. In terms of assembly, component of the cytochrome c oxidase (complex IV, CIV), a multisubunit enzyme composed of 14 subunits. The complex is composed of a catalytic core of 3 subunits MT-CO1, MT-CO2 and MT-CO3, encoded in the mitochondrial DNA, and 11 supernumerary subunits COX4I, COX5A, COX5B, COX6A, COX6B, COX6C, COX7A, COX7B, COX7C, COX8 and NDUFA4, which are encoded in the nuclear genome. The complex exists as a monomer or a dimer and forms supercomplexes (SCs) in the inner mitochondrial membrane with NADH-ubiquinone oxidoreductase (complex I, CI) and ubiquinol-cytochrome c oxidoreductase (cytochrome b-c1 complex, complex III, CIII), resulting in different assemblies (supercomplex SCI(1)III(2)IV(1) and megacomplex MCI(2)III(2)IV(2)).

The protein resides in the mitochondrion inner membrane. Its pathway is energy metabolism; oxidative phosphorylation. In terms of biological role, component of the cytochrome c oxidase, the last enzyme in the mitochondrial electron transport chain which drives oxidative phosphorylation. The respiratory chain contains 3 multisubunit complexes succinate dehydrogenase (complex II, CII), ubiquinol-cytochrome c oxidoreductase (cytochrome b-c1 complex, complex III, CIII) and cytochrome c oxidase (complex IV, CIV), that cooperate to transfer electrons derived from NADH and succinate to molecular oxygen, creating an electrochemical gradient over the inner membrane that drives transmembrane transport and the ATP synthase. Cytochrome c oxidase is the component of the respiratory chain that catalyzes the reduction of oxygen to water. Electrons originating from reduced cytochrome c in the intermembrane space (IMS) are transferred via the dinuclear copper A center (CU(A)) of subunit 2 and heme A of subunit 1 to the active site in subunit 1, a binuclear center (BNC) formed by heme A3 and copper B (CU(B)). The BNC reduces molecular oxygen to 2 water molecules using 4 electrons from cytochrome c in the IMS and 4 protons from the mitochondrial matrix. This is Cytochrome c oxidase subunit 8B, mitochondrial from Thunnus obesus (Bigeye tuna).